The sequence spans 159 residues: Na(+)/H(+) antiporter subunit E1 (159 aa).

The next 4 membrane-spanning stretches (helical) occupy residues 1–21 (MAVQLVLNFIIAVFWLFVTNS), 27–47 (FVLGFIFGLVLVYLLHRVLPG), 49–69 (FYVITLYRIIKLVIIFLIELI), and 101–121 (WQIVLLSNLITLTPGTVVLGV).

Belongs to the CPA3 antiporters (TC 2.A.63) subunit E family. May form a heterooligomeric complex that consists of seven subunits: mnhA1, mnhB1, mnhC1, mnhD1, mnhE1, mnhF1 and mnhG1.

The protein localises to the cell membrane. Mnh complex is a Na(+)/H(+) antiporter involved in Na(+) excretion. The sequence is that of Na(+)/H(+) antiporter subunit E1 (mnhE1) from Staphylococcus aureus (strain Mu3 / ATCC 700698).